We begin with the raw amino-acid sequence, 455 residues long: Kynurenine 3-monooxygenase (455 aa).

This sequence belongs to the aromatic-ring hydroxylase family. KMO subfamily. FAD serves as cofactor.

It catalyses the reaction L-kynurenine + NADPH + O2 + H(+) = 3-hydroxy-L-kynurenine + NADP(+) + H2O. Its pathway is cofactor biosynthesis; NAD(+) biosynthesis; quinolinate from L-kynurenine: step 1/3. Catalyzes the hydroxylation of L-kynurenine (L-Kyn) to form 3-hydroxy-L-kynurenine (L-3OHKyn). Required for synthesis of quinolinic acid. The protein is Kynurenine 3-monooxygenase of Stenotrophomonas maltophilia (strain K279a).